Reading from the N-terminus, the 125-residue chain is Aspartate 1-decarboxylase (125 aa).

Catalysis depends on Ser-25, which acts as the Schiff-base intermediate with substrate; via pyruvic acid. Position 25 is a pyruvic acid (Ser) (Ser-25). Position 57 (Thr-57) interacts with substrate. Residue Tyr-58 is the Proton donor of the active site. 73–75 (GAA) contacts substrate.

Belongs to the PanD family. Heterooctamer of four alpha and four beta subunits. Pyruvate is required as a cofactor. Is synthesized initially as an inactive proenzyme, which is activated by self-cleavage at a specific serine bond to produce a beta-subunit with a hydroxyl group at its C-terminus and an alpha-subunit with a pyruvoyl group at its N-terminus.

The protein resides in the cytoplasm. It catalyses the reaction L-aspartate + H(+) = beta-alanine + CO2. The protein operates within cofactor biosynthesis; (R)-pantothenate biosynthesis; beta-alanine from L-aspartate: step 1/1. In terms of biological role, catalyzes the pyruvoyl-dependent decarboxylation of aspartate to produce beta-alanine. The polypeptide is Aspartate 1-decarboxylase (Herpetosiphon aurantiacus (strain ATCC 23779 / DSM 785 / 114-95)).